The primary structure comprises 592 residues: Tegument protein US23 (592 aa).

The disordered stretch occupies residues 407–491 (PRSLGDGEEE…NNVVPNVERR (85 aa)). The segment covering 460 to 481 (ADDEEQGEDDDDSGAEPMEPEE) has biased composition (acidic residues).

This sequence belongs to the herpesviridae US22 family.

The protein resides in the virion tegument. The chain is Tegument protein US23 (US23) from Homo sapiens (Human).